A 939-amino-acid polypeptide reads, in one-letter code: Probable importin ECU10_0620 (939 aa).

Residues 23–90 (AEAMLMDLEK…VENILDLFLY (68 aa)) form the Importin N-terminal domain.

It belongs to the importin beta family.

It localises to the nucleus. The protein localises to the cytoplasm. Its function is as follows. Active in protein import into the nucleus. The polypeptide is Probable importin ECU10_0620 (Encephalitozoon cuniculi (strain GB-M1) (Microsporidian parasite)).